The sequence spans 273 residues: 4-hydroxy-tetrahydrodipicolinate reductase (273 aa).

Residues 11-16 and Glu-36 contribute to the NAD(+) site; that span reads GAGGRM. Position 37 (Arg-37) interacts with NADP(+). NAD(+)-binding positions include 100 to 102 and 124 to 127; these read GTT and AANY. Catalysis depends on His-157, which acts as the Proton donor/acceptor. (S)-2,3,4,5-tetrahydrodipicolinate is bound at residue His-158. The active-site Proton donor is the Lys-161. 167 to 168 is a (S)-2,3,4,5-tetrahydrodipicolinate binding site; that stretch reads GT.

Belongs to the DapB family.

The protein localises to the cytoplasm. It carries out the reaction (S)-2,3,4,5-tetrahydrodipicolinate + NAD(+) + H2O = (2S,4S)-4-hydroxy-2,3,4,5-tetrahydrodipicolinate + NADH + H(+). The catalysed reaction is (S)-2,3,4,5-tetrahydrodipicolinate + NADP(+) + H2O = (2S,4S)-4-hydroxy-2,3,4,5-tetrahydrodipicolinate + NADPH + H(+). It participates in amino-acid biosynthesis; L-lysine biosynthesis via DAP pathway; (S)-tetrahydrodipicolinate from L-aspartate: step 4/4. Its function is as follows. Catalyzes the conversion of 4-hydroxy-tetrahydrodipicolinate (HTPA) to tetrahydrodipicolinate. The chain is 4-hydroxy-tetrahydrodipicolinate reductase from Acinetobacter baylyi (strain ATCC 33305 / BD413 / ADP1).